The sequence spans 314 residues: ATP synthase gamma chain (314 aa).

This sequence belongs to the ATPase gamma chain family. F-type ATPases have 2 components, CF(1) - the catalytic core - and CF(0) - the membrane proton channel. CF(1) has five subunits: alpha(3), beta(3), gamma(1), delta(1), epsilon(1). CF(0) has three main subunits: a, b and c.

The protein resides in the cellular thylakoid membrane. Functionally, produces ATP from ADP in the presence of a proton gradient across the membrane. The gamma chain is believed to be important in regulating ATPase activity and the flow of protons through the CF(0) complex. The polypeptide is ATP synthase gamma chain (Synechocystis sp. (strain ATCC 27184 / PCC 6803 / Kazusa)).